The primary structure comprises 78 residues: MSRVCQVTGKRPVTGNNRSHARNATKRRFLPNLQTHRFWVESEKRFVKLRLTAKGMRIIDKKGIDTVLADIRARGENV.

The disordered stretch occupies residues Met1–His20.

Belongs to the bacterial ribosomal protein bL28 family.

In Vibrio parahaemolyticus serotype O3:K6 (strain RIMD 2210633), this protein is Large ribosomal subunit protein bL28.